We begin with the raw amino-acid sequence, 552 residues long: Urocanate hydratase (552 aa).

NAD(+) is bound by residues 49–50, Q127, 173–175, D193, 239–240, 260–264, 270–271, and Y319; these read GG, GMG, NA, QTSAH, and YI. The active site involves C407. An NAD(+)-binding site is contributed by G489.

This sequence belongs to the urocanase family. It depends on NAD(+) as a cofactor.

It localises to the cytoplasm. The enzyme catalyses 4-imidazolone-5-propanoate = trans-urocanate + H2O. The protein operates within amino-acid degradation; L-histidine degradation into L-glutamate; N-formimidoyl-L-glutamate from L-histidine: step 2/3. Functionally, catalyzes the conversion of urocanate to 4-imidazolone-5-propionate. This chain is Urocanate hydratase, found in Bacillus cereus (strain AH187).